Reading from the N-terminus, the 312-residue chain is Methionyl-tRNA formyltransferase (312 aa).

Position 109-112 (109-112 (SLLP)) interacts with (6S)-5,6,7,8-tetrahydrofolate.

It belongs to the Fmt family.

It catalyses the reaction L-methionyl-tRNA(fMet) + (6R)-10-formyltetrahydrofolate = N-formyl-L-methionyl-tRNA(fMet) + (6S)-5,6,7,8-tetrahydrofolate + H(+). Its function is as follows. Attaches a formyl group to the free amino group of methionyl-tRNA(fMet). The formyl group appears to play a dual role in the initiator identity of N-formylmethionyl-tRNA by promoting its recognition by IF2 and preventing the misappropriation of this tRNA by the elongation apparatus. The protein is Methionyl-tRNA formyltransferase of Listeria welshimeri serovar 6b (strain ATCC 35897 / DSM 20650 / CCUG 15529 / CIP 8149 / NCTC 11857 / SLCC 5334 / V8).